The sequence spans 384 residues: Probable L-tyrosine/L-aspartate decarboxylase (384 aa).

An N6-(pyridoxal phosphate)lysine modification is found at K233.

Belongs to the group II decarboxylase family. MfnA subfamily. Pyridoxal 5'-phosphate serves as cofactor.

The catalysed reaction is L-tyrosine + H(+) = tyramine + CO2. It catalyses the reaction L-aspartate + H(+) = beta-alanine + CO2. It functions in the pathway cofactor biosynthesis; methanofuran biosynthesis. It participates in cofactor biosynthesis; coenzyme A biosynthesis. In terms of biological role, catalyzes the decarboxylation of L-tyrosine to produce tyramine for methanofuran biosynthesis. Can also catalyze the decarboxylation of L-aspartate to produce beta-alanine for coenzyme A (CoA) biosynthesis. The sequence is that of Probable L-tyrosine/L-aspartate decarboxylase from Methanococcus maripaludis (strain DSM 14266 / JCM 13030 / NBRC 101832 / S2 / LL).